We begin with the raw amino-acid sequence, 306 residues long: Acetyl-coenzyme A carboxylase carboxyl transferase subunit beta (306 aa).

Positions 27-296 (LWHKCPSCEA…PEFVAAPVEP (270 aa)) constitute a CoA carboxyltransferase N-terminal domain. Zn(2+)-binding residues include C31, C34, C50, and C53. A C4-type zinc finger spans residues 31-53 (CPSCEAVLYRPELEKTLDVCPKC).

Belongs to the AccD/PCCB family. As to quaternary structure, acetyl-CoA carboxylase is a heterohexamer composed of biotin carboxyl carrier protein (AccB), biotin carboxylase (AccC) and two subunits each of ACCase subunit alpha (AccA) and ACCase subunit beta (AccD). It depends on Zn(2+) as a cofactor.

The protein resides in the cytoplasm. It carries out the reaction N(6)-carboxybiotinyl-L-lysyl-[protein] + acetyl-CoA = N(6)-biotinyl-L-lysyl-[protein] + malonyl-CoA. It functions in the pathway lipid metabolism; malonyl-CoA biosynthesis; malonyl-CoA from acetyl-CoA: step 1/1. In terms of biological role, component of the acetyl coenzyme A carboxylase (ACC) complex. Biotin carboxylase (BC) catalyzes the carboxylation of biotin on its carrier protein (BCCP) and then the CO(2) group is transferred by the transcarboxylase to acetyl-CoA to form malonyl-CoA. The chain is Acetyl-coenzyme A carboxylase carboxyl transferase subunit beta from Pseudomonas fluorescens (strain ATCC BAA-477 / NRRL B-23932 / Pf-5).